The sequence spans 166 residues: NADH-quinone oxidoreductase subunit I (166 aa).

2 consecutive 4Fe-4S ferredoxin-type domains span residues 57-87 and 97-126; these read LRRY…IESE and TRYD…VTPI. 8 residues coordinate [4Fe-4S] cluster: cysteine 67, cysteine 70, cysteine 73, cysteine 77, cysteine 106, cysteine 109, cysteine 112, and cysteine 116.

It belongs to the complex I 23 kDa subunit family. As to quaternary structure, NDH-1 is composed of 14 different subunits. Subunits NuoA, H, J, K, L, M, N constitute the membrane sector of the complex. It depends on [4Fe-4S] cluster as a cofactor.

It localises to the cell inner membrane. It catalyses the reaction a quinone + NADH + 5 H(+)(in) = a quinol + NAD(+) + 4 H(+)(out). Functionally, NDH-1 shuttles electrons from NADH, via FMN and iron-sulfur (Fe-S) centers, to quinones in the respiratory chain. The immediate electron acceptor for the enzyme in this species is believed to be ubiquinone. Couples the redox reaction to proton translocation (for every two electrons transferred, four hydrogen ions are translocated across the cytoplasmic membrane), and thus conserves the redox energy in a proton gradient. This Legionella pneumophila (strain Paris) protein is NADH-quinone oxidoreductase subunit I.